Reading from the N-terminus, the 121-residue chain is Small ribosomal subunit protein uS11c (121 aa).

Belongs to the universal ribosomal protein uS11 family. Part of the 30S ribosomal subunit.

Its subcellular location is the plastid. The protein resides in the chloroplast. The chain is Small ribosomal subunit protein uS11c from Cyanidioschyzon merolae (strain NIES-3377 / 10D) (Unicellular red alga).